The sequence spans 462 residues: Argininosuccinate lyase (462 aa).

Belongs to the lyase 1 family. Argininosuccinate lyase subfamily.

The protein resides in the cytoplasm. The catalysed reaction is 2-(N(omega)-L-arginino)succinate = fumarate + L-arginine. It participates in amino-acid biosynthesis; L-arginine biosynthesis; L-arginine from L-ornithine and carbamoyl phosphate: step 3/3. This is Argininosuccinate lyase from Hydrogenovibrio crunogenus (strain DSM 25203 / XCL-2) (Thiomicrospira crunogena).